Reading from the N-terminus, the 69-residue chain is Peptide Hact-1 (69 aa).

The signal sequence occupies residues 1 to 21 (MDRKFHLCLLLVILGTIIVQG). The propeptide occupies 22–57 (APLENENDADPDKPQKYRYYLKRATTEKKDNDPAKP). Residues Cys-59 and Cys-68 are joined by a disulfide bond.

In terms of tissue distribution, tentacle (ecto and/or endoderm tissue), and possibly also nematoblasts.

It is found in the secreted. The protein resides in the nematocyst. Functionally, peptide with unknown function. Has a limited effect on human peripheral blood mononuclear cells. Does not show activity against both Gram-positive and Gram-negative bacteria nor is it active on the 26 voltage-gated ion channels tested. The protein is Peptide Hact-1 of Heliofungia actiniformis (Mushroom coral).